The primary structure comprises 742 residues: Probable serine/threonine-protein kinase PkwA (742 aa).

The region spanning 16–266 is the Protein kinase domain; the sequence is YRLVSRLGAG…TAELLAQLST (251 aa). ATP is bound by residues 22-30 and Lys-44; that span reads LGAGGMGQV. Asp-138 serves as the catalytic Proton acceptor. A disordered region spans residues 266–394; the sequence is TDHTGDDWPP…PWSPPRVQPP (129 aa). Residues 301 to 318 show a composition bias toward pro residues; that stretch reads EPPPPSHGPPRPSEPLPD. Residues 343–356 show a composition bias toward basic and acidic residues; that stretch reads LEEKPIQVIHEPER. Pro residues predominate over residues 377–392; that stretch reads PRPAAPQPPWSPPRVQ. 7 WD repeats span residues 455 to 496, 497 to 538, 539 to 580, 581 to 621, 622 to 663, 664 to 705, and 706 to 742; these read ILTT…ELHT, LEGH…ERAV, FEGH…EHAV, LKGH…KERD, VLQA…ALHT, FEGH…EHTT, and LEGH…IATE.

The protein belongs to the protein kinase superfamily. Ser/Thr protein kinase family.

It catalyses the reaction L-seryl-[protein] + ATP = O-phospho-L-seryl-[protein] + ADP + H(+). It carries out the reaction L-threonyl-[protein] + ATP = O-phospho-L-threonyl-[protein] + ADP + H(+). May play a regulatory role during the complex growth cycle and in secondary metabolite production. The chain is Probable serine/threonine-protein kinase PkwA (pkwA) from Thermomonospora curvata.